Reading from the N-terminus, the 67-residue chain is Small ribosomal subunit protein eS31 (67 aa).

Positions 31, 34, 49, and 52 each coordinate Zn(2+). The C4-type zinc finger occupies 31–52 (CPKCGAGVFMAEHLNRFACGKC).

This sequence belongs to the eukaryotic ribosomal protein eS31 family. Part of the 30S ribosomal subunit. Zn(2+) is required as a cofactor.

The polypeptide is Small ribosomal subunit protein eS31 (Methanococcus maripaludis (strain C5 / ATCC BAA-1333)).